The primary structure comprises 371 residues: Monomethylxanthine methyltransferase 2 (371 aa).

Tyr-18, Cys-61, Asn-66, Asp-100, Leu-101, Ser-139, Phe-140, and Cys-156 together coordinate S-adenosyl-L-homocysteine. Theobromine is bound by residues Tyr-157, His-160, and Trp-161. Mg(2+) is bound by residues Asn-178, Asp-260, Phe-262, and Asn-263. Tyr-355 contributes to the theobromine binding site.

It belongs to the methyltransferase superfamily. Type-7 methyltransferase family. Mg(2+) is required as a cofactor.

The enzyme catalyses 7-methylxanthine + S-adenosyl-L-methionine = theobromine + S-adenosyl-L-homocysteine + H(+). The protein operates within alkaloid biosynthesis. In terms of biological role, involved in the biosynthesis of caffeine. Catalyzes the conversion of 7-methylxanthine (7mX) to theobromine and with a lower activity of paraxanthine to caffeine. The protein is Monomethylxanthine methyltransferase 2 of Coffea canephora (Robusta coffee).